Here is a 55-residue protein sequence, read N- to C-terminus: Large ribosomal subunit protein bL33 (55 aa).

Belongs to the bacterial ribosomal protein bL33 family.

The sequence is that of Large ribosomal subunit protein bL33 from Sphingopyxis alaskensis (strain DSM 13593 / LMG 18877 / RB2256) (Sphingomonas alaskensis).